Reading from the N-terminus, the 178-residue chain is Oligoribonuclease (178 aa).

Residues 7 to 168 (LIWIDLEMTG…DDIRESIAEL (162 aa)) enclose the Exonuclease domain. The active site involves tyrosine 128.

This sequence belongs to the oligoribonuclease family.

Its subcellular location is the cytoplasm. Its function is as follows. 3'-to-5' exoribonuclease specific for small oligoribonucleotides. The chain is Oligoribonuclease from Francisella tularensis subsp. holarctica (strain FTNF002-00 / FTA).